The sequence spans 586 residues: Urease subunit alpha (586 aa).

A Urease domain is found at 134–586 (GAIDTHIHFI…LPMAQRYFLF (453 aa)). Ni(2+)-binding residues include histidine 139, histidine 141, and lysine 222. At lysine 222 the chain carries N6-carboxylysine. Histidine 224 serves as a coordination point for substrate. Ni(2+) is bound by residues histidine 251 and histidine 277. Histidine 325 (proton donor) is an active-site residue. Residue aspartate 365 coordinates Ni(2+).

This sequence belongs to the metallo-dependent hydrolases superfamily. Urease alpha subunit family. In terms of assembly, heterotrimer of UreA (gamma), UreB (beta) and UreC (alpha) subunits. Three heterotrimers associate to form the active enzyme. Ni cation is required as a cofactor. In terms of processing, carboxylation allows a single lysine to coordinate two nickel ions.

It is found in the cytoplasm. It carries out the reaction urea + 2 H2O + H(+) = hydrogencarbonate + 2 NH4(+). The protein operates within nitrogen metabolism; urea degradation; CO(2) and NH(3) from urea (urease route): step 1/1. In Gloeothece citriformis (strain PCC 7424) (Cyanothece sp. (strain PCC 7424)), this protein is Urease subunit alpha.